We begin with the raw amino-acid sequence, 147 residues long: Hemoglobin subunit epsilon (147 aa).

Residues 3–147 (HFTAEEKTAI…VASALAHKYH (145 aa)) form the Globin domain. Phosphoserine is present on residues S14 and S51. H64 and H93 together coordinate heme b.

Belongs to the globin family. Red blood cells.

In terms of biological role, hemoglobin epsilon chain is an embryonic-type beta-type chain found in prenatal and neonatal marsupials. The chain is Hemoglobin subunit epsilon (HBE1) from Notamacropus eugenii (Tammar wallaby).